Reading from the N-terminus, the 533-residue chain is MEFGLKKRARHEVKVEVASLETKYPHNVMLYHYPPTEDVHIDEFEELALERLRLLRVLDRASTRNLRVLSDEWKEIVSADLTREGLRSYLRLCSTGGSAKHEADIQTRRRDYLSHFILRLAYCRSEDLARWFVAREMELFRYKFAALSSFEVKQFLEANGFEIHPLTEAQKDEVKDGLYESTVGQSVAKIELLDFYKVPFTQVLDLVRGRRCFLKAGYAYVNTHDLVSLVGTKQQDEIEQGLQAAKTMVEDVEADERISRTLKALHNSYTGRDYTVCRDAAVPIESLDQLSKTSMPLCMRMCHEHIRANHHIKHSGRMQYGLFLKGIGVALEDSLRFWREEFTKKMDADKFTRSYEYNIYHNYGKKGSMVNYTPYSCAKIIKDVAGPGDCHGCPYKNMDQGSLKTKLSSYGLSASAIDEVMFFVSRGHYQIGCGKYFQLTHNSPVEPSINHPNNYFEESQIAMGNRQKRANGSAPPKARIRPDIKGHGDRSMLMGDDDDELWRIAETQERIMQSQKDISEAFNDDLDLTQIDY.

[4Fe-4S] cluster is bound by residues C298, C377, C393, and C433. Positions 466–492 (RQKRANGSAPPKARIRPDIKGHGDRSM) are disordered. The segment covering 480–490 (IRPDIKGHGDR) has biased composition (basic and acidic residues).

The protein belongs to the eukaryotic-type primase large subunit family. Heterodimer of a catalytic subunit Prim1 and a regulatory subunit Prim2, also known as the DNA primase complex. Component of the alpha DNA polymerase complex (also known as the alpha DNA polymerase-primase complex) consisting of four subunits: the catalytic subunit PolA1, the regulatory subunit PolA2, and the primase complex subunits Prim1 and Prim2 respectively. PolA1 associates with the DNA primase complex before association with PolA2. Requires [4Fe-4S] cluster as cofactor. Expressed in embryos (at protein level).

Functionally, regulatory subunit of the DNA primase complex and component of the DNA polymerase alpha complex (also known as the alpha DNA polymerase-primase complex) which play an essential role in the initiation of DNA synthesis. During the S phase of the cell cycle, the DNA polymerase alpha complex (composed of a catalytic subunit PolA1, an accessory subunit PolA2 and two primase subunits, the catalytic subunit Prim1 and the regulatory subunit Prim2) is recruited to DNA at the replicative forks. The primase subunit of the polymerase alpha complex initiates DNA synthesis by oligomerising short RNA primers on both leading and lagging strands. These primers are initially extended by the polymerase alpha catalytic subunit and subsequently transferred to polymerase delta and polymerase epsilon for processive synthesis on the lagging and leading strand, respectively. In the primase complex, both subunits are necessary for the initial di-nucleotide formation, but the extension of the primer depends only on the catalytic subunit. Stabilizes and modulates the activity of the catalytic subunit. This Drosophila melanogaster (Fruit fly) protein is DNA primase large subunit.